The following is a 256-amino-acid chain: Major prion protein (256 aa).

A signal peptide spans 1–24; sequence MVKSHIGSWILVLFVAMWSDVGLC. The tract at residues 25–233 is interaction with GRB2, ERI3 and SYN1; it reads KKRPKPGGGW…ESQAYYQRGA (209 aa). The segment at 28–110 is disordered; the sequence is PKPGGGWNTG…QWNKPSKPKT (83 aa). 5 consecutive repeat copies span residues 54–62, 63–70, 71–78, 79–86, and 87–95. Positions 54–95 are 5 X 8 AA tandem repeats of P-H-G-G-G-W-G-Q; that stretch reads PQGGGGWGQPHGGGWGQPHGGGWGQPHGGGWGQPHGGGGWGQ. Gly residues predominate over residues 55 to 97; that stretch reads QGGGGWGQPHGGGWGQPHGGGWGQPHGGGWGQPHGGGGWGQGG. The Cu(2+) site is built by histidine 64, glycine 65, glycine 66, histidine 72, glycine 73, glycine 74, histidine 80, glycine 81, glycine 82, histidine 88, glycine 90, and glycine 91. An intrachain disulfide couples cysteine 182 to cysteine 217. Asparagine 184 and asparagine 200 each carry an N-linked (GlcNAc...) asparagine glycan. A lipid anchor (GPI-anchor amidated alanine) is attached at alanine 233. The propeptide at 234 to 256 is removed in mature form; the sequence is SVILFSPPPVILLISFLIFLIVG.

It belongs to the prion family. Monomer and homodimer. Has a tendency to aggregate into amyloid fibrils containing a cross-beta spine, formed by a steric zipper of superposed beta-strands. Soluble oligomers may represent an intermediate stage on the path to fibril formation. Copper binding may promote oligomerization. Interacts with GRB2, APP, ERI3/PRNPIP and SYN1. Mislocalized cytosolically exposed PrP interacts with MGRN1; this interaction alters MGRN1 subcellular location and causes lysosomal enlargement. Interacts with KIAA1191.

Its subcellular location is the cell membrane. The protein localises to the golgi apparatus. Its function is as follows. Its primary physiological function is unclear. Has cytoprotective activity against internal or environmental stresses. May play a role in neuronal development and synaptic plasticity. May be required for neuronal myelin sheath maintenance. May play a role in iron uptake and iron homeostasis. Soluble oligomers are toxic to cultured neuroblastoma cells and induce apoptosis (in vitro). Association with GPC1 (via its heparan sulfate chains) targets PRNP to lipid rafts. Also provides Cu(2+) or Zn(2+) for the ascorbate-mediated GPC1 deaminase degradation of its heparan sulfate side chains. This chain is Major prion protein (PRNP), found in Capra hircus (Goat).